The following is a 404-amino-acid chain: Putative arginine deiminase (404 aa).

Catalysis depends on Cys-394, which acts as the Amidino-cysteine intermediate.

It belongs to the arginine deiminase family.

It is found in the cytoplasm. It carries out the reaction L-arginine + H2O = L-citrulline + NH4(+). It participates in amino-acid degradation; L-arginine degradation via ADI pathway; carbamoyl phosphate from L-arginine: step 1/2. The sequence is that of Putative arginine deiminase (arcA) from Mycoplasma pneumoniae (strain ATCC 29342 / M129 / Subtype 1) (Mycoplasmoides pneumoniae).